A 372-amino-acid chain; its full sequence is Stress-activated protein kinase JNK (372 aa).

Residues 24–320 (YINLRPIGSG…VDEALKHEYI (297 aa)) enclose the Protein kinase domain. ATP-binding positions include 31-36 (GSGAQG) and K53. Residue D149 is the Proton acceptor of the active site. T181 carries the post-translational modification Phosphothreonine. The short motif at 181 to 183 (TPY) is the TXY element. Y183 bears the Phosphotyrosine mark.

Belongs to the protein kinase superfamily. CMGC Ser/Thr protein kinase family. MAP kinase subfamily. Interacts with MKP-4 (via tyrosine-protein phosphatase domain); the interaction dephosphorylates bsk. Requires Mg(2+) as cofactor. In terms of processing, dually phosphorylated on Thr-181 and Tyr-183, which activates the enzyme. During gastrulation, expression is seen in cells undergoing morphogenetic movements. By stage 9 of embryonic development, expression is ubiquitous. At stages 12-14, expression occurs in epidermis and central nervous system. At stage 15, expression is restricted to ventral nerve cord, brain and some peripheral neurons. In larvae, expression is seen in all imaginal disks, with highest levels in wing and eye disks, and in the CNS. Adults express the protein in fat body and hemocytes.

The protein resides in the nucleus. The protein localises to the cytoplasm. The enzyme catalyses L-seryl-[protein] + ATP = O-phospho-L-seryl-[protein] + ADP + H(+). It carries out the reaction L-threonyl-[protein] + ATP = O-phospho-L-threonyl-[protein] + ADP + H(+). Activated by threonine and tyrosine phosphorylation by the dual specificity kinase, hep. Inhibited by dual specificity phosphatase, puckered. Functionally, mitogen-activated protein kinase and key component of the c-Jun N-terminal kinase (JNK) pathway which phosphorylate and activate transcription factors involved in a wide range of biological processes including response to various stresses, cellular proliferation, differentiation and migration, and regulation of cell shape. Responds to activation by environmental stress by phosphorylating a number of transcription factors, primarily components of AP-1 such as Jra and also the transcriptional repressor aop, and thus regulates transcriptional activity. Component of the immune response activated by bacterial infection, and is involved in wound healing and in dorsal closure, a morphogenetic movement during embryogenesis. Functions in the systematic response to wounding acting downstream of the Hayan-phenoloxidase PPO1 cascade. During epidermal wound healing involved in cellular polarization by inducing the translocation of sktl and mys/integrin beta to the trailing edge. Exhibits cytoprotective activity in neuronal cells in response to wounding to the integument. Controls the expression of a phosphatase, puckered, at the edges of wounded epidermal tissue and in the dorsal epithelium during dorsal closure. Regulates the activity of SREBP in neurons and thereby the accumulation of lipids in glia. Plays a role in positively regulating the expression of DIP2 independently of AP-1, thereby ensuring proper axon guidance in mushroom bodies. In enterocytes and differentiating progenitors of the gut that are experiencing inorganic phosphate (Pi) deficiency, activated by Cka to induce nearby progenitor cells to proliferate and form new absorptive cells, probably helping the organism to cope with the nutrient deficiency by maximizing absorption of dietary Pi. This chain is Stress-activated protein kinase JNK, found in Drosophila melanogaster (Fruit fly).